Here is a 160-residue protein sequence, read N- to C-terminus: SsrA-binding protein (160 aa).

The segment at 131–160 is disordered; sequence KKEYDKRHTERERDSDRELQRAVRTKGKDD.

Belongs to the SmpB family.

Its subcellular location is the cytoplasm. Its function is as follows. Required for rescue of stalled ribosomes mediated by trans-translation. Binds to transfer-messenger RNA (tmRNA), required for stable association of tmRNA with ribosomes. tmRNA and SmpB together mimic tRNA shape, replacing the anticodon stem-loop with SmpB. tmRNA is encoded by the ssrA gene; the 2 termini fold to resemble tRNA(Ala) and it encodes a 'tag peptide', a short internal open reading frame. During trans-translation Ala-aminoacylated tmRNA acts like a tRNA, entering the A-site of stalled ribosomes, displacing the stalled mRNA. The ribosome then switches to translate the ORF on the tmRNA; the nascent peptide is terminated with the 'tag peptide' encoded by the tmRNA and targeted for degradation. The ribosome is freed to recommence translation, which seems to be the essential function of trans-translation. The protein is SsrA-binding protein of Pseudomonas syringae pv. tomato (strain ATCC BAA-871 / DC3000).